Reading from the N-terminus, the 678-residue chain is NADPH--cytochrome P450 reductase (678 aa).

Residue Gly2 is modified to N-acetylglycine. Topologically, residues 2–22 (GDSNVDTGTTTSEMVAEEVSL) are lumenal. Residues 23-43 (FSATDMVLFSLIVGLLTYWFI) traverse the membrane as a helical segment. The Cytoplasmic portion of the chain corresponds to 44–678 (FRKKKDEVPE…KGRYSLDVWS (635 aa)). Residue Ser63 is modified to Phosphoserine. One can recognise a Flavodoxin-like domain in the interval 80–224 (IIVFYGSQTG…DFITWREQFW (145 aa)). FMN contacts are provided by residues 86–91 (SQTGTA), 138–141 (ATYG), 173–182 (LGNKTYEHFN), and Asp208. Positions 279–521 (KNPFLAVVTT…FVRKSQFRLP (243 aa)) constitute an FAD-binding FR-type domain. Arg298 contacts NADP(+). Residues Arg424, 454-457 (RYYS), 472-474 (CAV), Tyr478, and 488-491 (GVAT) each bind FAD. NADP(+)-binding positions include Thr535, 596-597 (SR), 602-606 (KVYVQ), and Asp639. FAD is bound at residue Trp677.

The protein belongs to the NADPH--cytochrome P450 reductase family. In the N-terminal section; belongs to the flavodoxin family. This sequence in the C-terminal section; belongs to the flavoprotein pyridine nucleotide cytochrome reductase family. FAD is required as a cofactor. It depends on FMN as a cofactor.

Its subcellular location is the endoplasmic reticulum membrane. It carries out the reaction 2 oxidized [cytochrome P450] + NADPH = 2 reduced [cytochrome P450] + NADP(+) + H(+). This enzyme is required for electron transfer from NADP to cytochrome P450 in microsomes. It can also provide electron transfer to heme oxygenase and cytochrome B5. This is NADPH--cytochrome P450 reductase from Sus scrofa (Pig).